We begin with the raw amino-acid sequence, 96 residues long: Large ribosomal subunit protein eL21 (96 aa).

The segment at 1–22 (MRKSKGFKSRSRYKLKRSIRPK) is disordered.

It belongs to the eukaryotic ribosomal protein eL21 family.

This Methanosphaera stadtmanae (strain ATCC 43021 / DSM 3091 / JCM 11832 / MCB-3) protein is Large ribosomal subunit protein eL21.